A 56-amino-acid polypeptide reads, in one-letter code: Putative 2-Cys peroxiredoxin BAS1 (56 aa).

This sequence belongs to the peroxiredoxin family. AhpC/Prx1 subfamily. Homodimer; disulfide-linked, upon oxidation.

It is found in the plastid. The protein resides in the chloroplast. It carries out the reaction a hydroperoxide + [thioredoxin]-dithiol = an alcohol + [thioredoxin]-disulfide + H2O. Its function is as follows. Thiol-specific peroxidase that catalyzes the reduction of hydrogen peroxide and organic hydroperoxides to water and alcohols, respectively. Plays a role in cell protection against oxidative stress by detoxifying peroxides. May be an antioxidant enzyme particularly in the developing shoot and photosynthesizing leaf. This Pinus strobus (Eastern white pine) protein is Putative 2-Cys peroxiredoxin BAS1.